Reading from the N-terminus, the 142-residue chain is D-aminoacyl-tRNA deacylase (142 aa).

The Gly-cisPro motif, important for rejection of L-amino acids motif lies at 133 to 134; that stretch reads GP.

The protein belongs to the DTD family. Homodimer.

The protein resides in the cytoplasm. The catalysed reaction is glycyl-tRNA(Ala) + H2O = tRNA(Ala) + glycine + H(+). It carries out the reaction a D-aminoacyl-tRNA + H2O = a tRNA + a D-alpha-amino acid + H(+). Functionally, an aminoacyl-tRNA editing enzyme that deacylates mischarged D-aminoacyl-tRNAs. Also deacylates mischarged glycyl-tRNA(Ala), protecting cells against glycine mischarging by AlaRS. Acts via tRNA-based rather than protein-based catalysis; rejects L-amino acids rather than detecting D-amino acids in the active site. By recycling D-aminoacyl-tRNA to D-amino acids and free tRNA molecules, this enzyme counteracts the toxicity associated with the formation of D-aminoacyl-tRNA entities in vivo and helps enforce protein L-homochirality. The chain is D-aminoacyl-tRNA deacylase from Acidothermus cellulolyticus (strain ATCC 43068 / DSM 8971 / 11B).